Reading from the N-terminus, the 319-residue chain is Coproporphyrin III ferrochelatase (319 aa).

Residues His193 and Glu274 each contribute to the Fe(2+) site.

It belongs to the ferrochelatase family.

It is found in the cytoplasm. It carries out the reaction Fe-coproporphyrin III + 2 H(+) = coproporphyrin III + Fe(2+). The protein operates within porphyrin-containing compound metabolism; protoheme biosynthesis. Functionally, involved in coproporphyrin-dependent heme b biosynthesis. Catalyzes the insertion of ferrous iron into coproporphyrin III to form Fe-coproporphyrin III. The protein is Coproporphyrin III ferrochelatase of Streptococcus mutans serotype c (strain ATCC 700610 / UA159).